Consider the following 1081-residue polypeptide: FHIP family protein GA25918 (1081 aa).

Residues 1–11 (MSWLRSSPLRQ) are compositionally biased toward polar residues. Disordered regions lie at residues 1–31 (MSWLRSSPLRQSGNGGGGGVSTGHSSTGSLR), 504–524 (ARPKSVHEQQAPSGATGEQPI), 650–685 (ADEESDATDLTVTTTTASEADLEHNSSSVSSGMGGG), 830–913 (NENS…AASS), and 933–1027 (NNNN…SEPA). At serine 508 the chain carries Phosphoserine. The segment covering 657–668 (TDLTVTTTTASE) has biased composition (low complexity). A Phosphoserine modification is found at serine 833. Residues 840–856 (QPQTTLSQQQQQQQGQQ) are compositionally biased toward low complexity. Residues 857–876 (RSAYATLSAATPVQATQTSA) show a composition bias toward polar residues. Low complexity-rich tracts occupy residues 891–913 (SKSISSMFSRRSTPNPPSSAASS) and 933–953 (NNNNSGSGGQSQPFSSTGTGT). Residues 954–963 (CETSLSTNPQ) show a composition bias toward polar residues. Over residues 964 to 993 (SGAAAARSTGTATTANGNSSNSNISIGGST) the composition is skewed to low complexity. Over residues 994–1010 (QTLSGHSNTTTYSSSTL) the composition is skewed to polar residues.

The protein belongs to the FHIP family.

In Drosophila pseudoobscura pseudoobscura (Fruit fly), this protein is FHIP family protein GA25918.